A 171-amino-acid chain; its full sequence is S-ribosylhomocysteine lyase (171 aa).

Fe cation contacts are provided by H54, H58, and C128.

Belongs to the LuxS family. In terms of assembly, homodimer. Fe cation is required as a cofactor.

The catalysed reaction is S-(5-deoxy-D-ribos-5-yl)-L-homocysteine = (S)-4,5-dihydroxypentane-2,3-dione + L-homocysteine. Its function is as follows. Involved in the synthesis of autoinducer 2 (AI-2) which is secreted by bacteria and is used to communicate both the cell density and the metabolic potential of the environment. The regulation of gene expression in response to changes in cell density is called quorum sensing. Catalyzes the transformation of S-ribosylhomocysteine (RHC) to homocysteine (HC) and 4,5-dihydroxy-2,3-pentadione (DPD). This chain is S-ribosylhomocysteine lyase, found in Shigella boydii serotype 4 (strain Sb227).